Reading from the N-terminus, the 756-residue chain is MSLRRLSPSHLILGTLVLGVIIFNLYVLTSTHEDIKKVKGPTYHTSDNTKIQSHISNYDSEEYVDRLTAEIEDAKKEELISEIRKKLEIQEKPGVIQKLKTELRMKYIDDIKNHLKQEITEQYSNEIFKQYAFSFEIYSKKVDEYALQLENSLKPASCLAILQQAEKDTDSIPDLENYLTKANDKYFKRQEYWRYLLKDILLNNKPKCEPLTKEEKGEKLNPTYQWDARIISEQYLLGSKLTIPGEKFRALRSAHDQVVKQLKSLPDPPSQFISGHGIVVNGGGNMIGSALTAIANMRERGSQLPVELILDTKQEYDKQICEELLPKKLNGKCVIVEEQVGKEVFDIINEKFSRKIMGLLVSSFDHIIAMDADNLAIKNVDNLLFTEPYLSTKMILWPDLWVKLTSPLYYKIARIEPGEIVDRFGIPNDASFAEYITKDKQSEVHYHDLDNLPSTISVETGQMVFSKREHLKSLLLALYYNINGKDFYIDLLYQGAYGEGDRETIVPALHVMNERYSLTNHKVHILGYDAPNGKYSETTLGQTDPRDGFEFYQDWRKFLTSRKLDTRLNPFQSGGYTSDLMKQFHDYKRQIYQDKQYEDEAAVHRMITYKLPSILFLHCNHPKIDPLKNSKEADAEFGVYSRRNMGLPDKVEKLLEGKDWELRFHTISQWVACEAISKSSLYWEKIAGKSQQQVCESVGKYIEFLKKDTFDNEATKLTILNQLGEKSQPKQPEINNNNNNNNNDDDNGKNKQGAAS.

The Cytoplasmic segment spans residues Met1–His10. A helical membrane pass occupies residues Leu11 to Thr31. Residues His32 to Ser756 are Extracellular-facing. Over residues Leu723–Ile734 the composition is skewed to polar residues. Positions Leu723–Ser756 are disordered.

It belongs to the MNN1/MNT family.

The protein localises to the golgi apparatus membrane. It functions in the pathway protein modification; protein glycosylation. Alpha-1,2-mannosyltransferase required for cell wall integrity. Responsible for addition of the first alpha-1,2-linked mannose to form the branches on the mannan backbone of oligosaccharides. Addition of alpha-1,2-mannose is required for stabilization of the alpha-1,6-mannose backbone and hence regulates mannan fibril length; and is important for both immune recognition and virulence. This is Alpha-1,2-mannosyltransferase MNN26 (MNN26) from Candida albicans (strain SC5314 / ATCC MYA-2876) (Yeast).